The chain runs to 258 residues: Ribosomal RNA small subunit methyltransferase A (258 aa).

Positions 13, 15, 40, 61, 86, and 106 each coordinate S-adenosyl-L-methionine.

The protein belongs to the class I-like SAM-binding methyltransferase superfamily. rRNA adenine N(6)-methyltransferase family. RsmA subfamily.

The protein resides in the cytoplasm. The catalysed reaction is adenosine(1518)/adenosine(1519) in 16S rRNA + 4 S-adenosyl-L-methionine = N(6)-dimethyladenosine(1518)/N(6)-dimethyladenosine(1519) in 16S rRNA + 4 S-adenosyl-L-homocysteine + 4 H(+). Specifically dimethylates two adjacent adenosines (A1518 and A1519) in the loop of a conserved hairpin near the 3'-end of 16S rRNA in the 30S particle. May play a critical role in biogenesis of 30S subunits. The sequence is that of Ribosomal RNA small subunit methyltransferase A from Coxiella burnetii (strain CbuG_Q212) (Coxiella burnetii (strain Q212)).